Reading from the N-terminus, the 311-residue chain is Zeta-sarcoglycan (311 aa).

The Cytoplasmic portion of the chain corresponds to 1-50; sequence MDRSTDLDIQELKMTREQYILATQQNNLPRPENAQLYPVGIYGWRKRCLY. The chain crosses the membrane as a helical; Signal-anchor for type II membrane protein span at residues 51-71; that stretch reads FFVLLLLVTMIVNLAMTIWIL. At 72 to 311 the chain is on the extracellular side; the sequence is KVMNFTVDGM…QSSSSICLWN (240 aa). N-linked (GlcNAc...) asparagine glycosylation is found at Asn-75 and Asn-123. Cysteines 285 and 301 form a disulfide.

It belongs to the sarcoglycan beta/delta/gamma/zeta family. In terms of tissue distribution, expressed in the heart, skeletal muscle and arterial vascular smooth muscle.

Its subcellular location is the cell membrane. The protein resides in the sarcolemma. It is found in the cytoplasm. It localises to the cytoskeleton. Its function is as follows. Component of the sarcoglycan complex, a subcomplex of the dystrophin-glycoprotein complex which forms a link between the F-actin cytoskeleton and the extracellular matrix. May play a role in the maintenance of striated muscle membrane stability. In Mus musculus (Mouse), this protein is Zeta-sarcoglycan (Sgcz).